The primary structure comprises 271 residues: Formamidopyrimidine-DNA glycosylase (271 aa).

P2 acts as the Schiff-base intermediate with DNA in catalysis. E3 serves as the catalytic Proton donor. K57 acts as the Proton donor; for beta-elimination activity in catalysis. 3 residues coordinate DNA: H90, R109, and R151. An FPG-type zinc finger spans residues 236-270; it reads MVYGRAGEACVTCKTKLQEIRQSNRSSVFCPSCQQ. R260 acts as the Proton donor; for delta-elimination activity in catalysis.

Belongs to the FPG family. In terms of assembly, monomer. Zn(2+) serves as cofactor.

The enzyme catalyses Hydrolysis of DNA containing ring-opened 7-methylguanine residues, releasing 2,6-diamino-4-hydroxy-5-(N-methyl)formamidopyrimidine.. It carries out the reaction 2'-deoxyribonucleotide-(2'-deoxyribose 5'-phosphate)-2'-deoxyribonucleotide-DNA = a 3'-end 2'-deoxyribonucleotide-(2,3-dehydro-2,3-deoxyribose 5'-phosphate)-DNA + a 5'-end 5'-phospho-2'-deoxyribonucleoside-DNA + H(+). Functionally, involved in base excision repair of DNA damaged by oxidation or by mutagenic agents. Acts as a DNA glycosylase that recognizes and removes damaged bases. Has a preference for oxidized purines, such as 7,8-dihydro-8-oxoguanine (8-oxoG). Has AP (apurinic/apyrimidinic) lyase activity and introduces nicks in the DNA strand. Cleaves the DNA backbone by beta-delta elimination to generate a single-strand break at the site of the removed base with both 3'- and 5'-phosphates. The polypeptide is Formamidopyrimidine-DNA glycosylase (Colwellia psychrerythraea (strain 34H / ATCC BAA-681) (Vibrio psychroerythus)).